A 166-amino-acid chain; its full sequence is MTESTSRRPAYARLLDRAVRILAVRDHSEQELRRKLAAPIMGKNGPEEIDATAEDYERVIAWCHEHGYLDDSRFVARFIASRSRKGYGPARIRQELNQKGISREATEKAMRECDIDWCALARDQATRKYGEPLPTVFSEKVKIQRFLLYRGYLMEDIQEIWRNFAD.

This sequence belongs to the RecX family.

The protein localises to the cytoplasm. Its function is as follows. Modulates RecA activity. This Escherichia coli (strain K12 / MC4100 / BW2952) protein is Regulatory protein RecX.